Consider the following 265-residue polypeptide: UPF0246 protein NT01EI_0662 (265 aa).

The protein belongs to the UPF0246 family.

The sequence is that of UPF0246 protein NT01EI_0662 from Edwardsiella ictaluri (strain 93-146).